The primary structure comprises 533 residues: D-2-hydroxyglutarate dehydrogenase, mitochondrial (533 aa).

The N-terminal 55 residues, 1-55 (MGLFQKCSRLSLRSSYMWSVCPQYSIAVTARETPDRALIVHWTQHRDVHNSRRLG), are a transit peptide targeting the mitochondrion. Positions 107 to 286 (VQGSSDVLLR…TAVSILCPRK (180 aa)) constitute an FAD-binding PCMH-type domain. R397, T401, and K412 together coordinate (R)-2-hydroxyglutarate. Position 397 (R397) interacts with (R)-lactate. R397, T401, and K412 together coordinate (R)-malate. Zn(2+)-binding residues include H445 and H452. Residue N454 coordinates (R)-2-hydroxyglutarate. E486 provides a ligand contact to Zn(2+). H487 provides a ligand contact to (R)-2-hydroxyglutarate. Position 487 (H487) interacts with (R)-lactate. H487 is a (R)-malate binding site.

It belongs to the FAD-binding oxidoreductase/transferase type 4 family. The cofactor is FAD.

Its subcellular location is the mitochondrion. The enzyme catalyses (R)-2-hydroxyglutarate + A = 2-oxoglutarate + AH2. It catalyses the reaction (R)-malate + A = oxaloacetate + AH2. Functionally, catalyzes the oxidation of D-2-hydroxyglutarate (D-2-HG) to alpha-ketoglutarate. Also catalyzes the oxidation of other D-2-hydroxyacids, such as D-malate (D-MAL) and D-lactate (D-LAC). Exhibits high activities towards D-2-HG and D-MAL but a very weak activity towards D-LAC. The chain is D-2-hydroxyglutarate dehydrogenase, mitochondrial (d2hgdh) from Danio rerio (Zebrafish).